Here is a 2542-residue protein sequence, read N- to C-terminus: Ankyrin repeat and KH domain-containing protein 1 (2542 aa).

Met-1 bears the N-acetylmethionine mark. A compositionally biased stretch (gly residues) spans 1-10; that stretch reads MLTDSGGGGT. Disordered stretches follow at residues 1-44 and 50-69; these read MLTD…IRTV and AGPA…SGTG. Residues 20 to 29 are compositionally biased toward low complexity; that stretch reads APRSAPAGAS. Positions 57–69 are enriched in gly residues; that stretch reads GSSGGGGSGSGTG. Phosphoserine occurs at positions 101 and 105. ANK repeat units follow at residues 204-233, 237-266, 271-300, 304-333, 337-366, 371-400, 404-433, 437-466, 470-499, 504-533, 534-563, 567-596, 600-629, 634-663, and 667-696; these read VDTR…SVNE, EGES…NVED, GDIT…DVNS, TGNT…NIED, NGHT…GINT, FKES…DQEH, EMHT…QVNM, SFES…NLEE, EGYT…NINA, TQET…DIEL, GCST…NVHA, TGDT…DLEH, GGRT…NVNR, NDHT…DPTH, and DGST…NVLS. Residues 775 to 852 are a coiled coil; sequence LECIVEETEG…RQLQMKTQQQ (78 aa). Ser-803 bears the Phosphoserine mark. ANK repeat units lie at residues 1054–1083, 1087–1116, 1121–1150, 1154–1183, 1189–1218, 1223–1252, 1256–1285, 1291–1320, 1324–1353, and 1357–1386; these read NHDT…KIEH, KGFT…DIEA, TKDT…NKEH, SDYT…EINS, LGIS…DINA, NRNT…NVEH, TGLT…DVNA, SRDT…HIDV, KGNT…DVDA, and RKIT…QFPS. The stretch at 1415–1485 forms a coiled coil; that stretch reads KAKDQQAAEA…ENKPKENSEL (71 aa). 3 disordered regions span residues 1441–1517, 1534–1614, and 1632–1664; these read REES…TIGI, NVVT…SQEL, and SQEE…YKTV. Over residues 1453-1463 the composition is skewed to basic residues; sequence REKRKEKRKKK. Residues 1464–1483 show a composition bias toward basic and acidic residues; it reads KEEQKRKQEEDEENKPKENS. The span at 1484 to 1502 shows a compositional bias: acidic residues; the sequence is ELPEDEDEEENDEDVEQEV. Positions 1503 to 1517 are enriched in low complexity; the sequence is PIEPPSATTTTTIGI. Position 1540 is a phosphoserine (Ser-1540). A Phosphothreonine modification is found at Thr-1553. Positions 1590-1603 are enriched in low complexity; that stretch reads NSDSDNLDSTDCNS. A compositionally biased stretch (polar residues) spans 1604-1614; sequence ESSSGGKSQEL. Position 1632 is a phosphoserine (Ser-1632). Polar residues predominate over residues 1638–1664; sequence STATSKTQTRLEGEVTPNSLSTSYKTV. A Phosphothreonine modification is found at Thr-1653. The KH domain occupies 1695 to 1759; that stretch reads RRSKKLSVPA…ESTRYAVQLI (65 aa). Disordered stretches follow at residues 1886–1923, 1987–2106, and 2260–2367; these read NTWG…VLPS, PSVS…APLT, and NMHP…IPPP. The span at 1898 to 1922 shows a compositional bias: polar residues; the sequence is PGNTNSSPKHNNTSRLPNQNGTVLP. A compositionally biased stretch (low complexity) spans 1987–1996; sequence PSVSSAPITS. The span at 1997 to 2019 shows a compositional bias: polar residues; sequence GQAPTTFLPASTSQAQLSSQKME. Positions 2042-2077 are enriched in low complexity; that stretch reads CTPSSTANSCSSSASNTPGAPETHPSSSPTPTSSNT. Positions 2078–2106 are enriched in polar residues; it reads QEEAQPSSVSDLSPMSMPFASNSEPAPLT. Composition is skewed to low complexity over residues 2285-2308 and 2337-2349; these read LPSI…FSGI and TSAS…APPT.

It belongs to the mask family. As to quaternary structure, interacts with PTPN11. Isoform 2 interacts with HIV-1 VPR. Interacts with NOD2. Ubiquitous with high expression in cervix, spleen and brain. Expressed in hematopoietic cells with increased expression in leukemia cells. Isoform 2 is highly expressed in spleen with almost no expression in muscle and brain.

Its subcellular location is the cytoplasm. In terms of biological role, may play a role as a scaffolding protein that may be associated with the abnormal phenotype of leukemia cells. Isoform 2 may possess an antiapoptotic effect and protect cells during normal cell survival through its regulation of caspases. In Homo sapiens (Human), this protein is Ankyrin repeat and KH domain-containing protein 1 (ANKHD1).